The following is a 663-amino-acid chain: UvrABC system protein B (663 aa).

In terms of domain architecture, Helicase ATP-binding spans 31–271 (DNIEGGEKAQ…EQSISKIQAE (241 aa)). 44–51 (GATGTGKT) serves as a coordination point for ATP. The Beta-hairpin signature appears at 97-120 (YYDYYQPEAYVPSSDTYIEKDSSV). In terms of domain architecture, Helicase C-terminal spans 435-601 (QMDDLLGEIN…TIKKDIRDLI (167 aa)). In terms of domain architecture, UVR spans 627-662 (QEAIKQLQKNMQEAAELLDFELAAQLRDLILELKAM).

It belongs to the UvrB family. As to quaternary structure, forms a heterotetramer with UvrA during the search for lesions. Interacts with UvrC in an incision complex.

It is found in the cytoplasm. Functionally, the UvrABC repair system catalyzes the recognition and processing of DNA lesions. A damage recognition complex composed of 2 UvrA and 2 UvrB subunits scans DNA for abnormalities. Upon binding of the UvrA(2)B(2) complex to a putative damaged site, the DNA wraps around one UvrB monomer. DNA wrap is dependent on ATP binding by UvrB and probably causes local melting of the DNA helix, facilitating insertion of UvrB beta-hairpin between the DNA strands. Then UvrB probes one DNA strand for the presence of a lesion. If a lesion is found the UvrA subunits dissociate and the UvrB-DNA preincision complex is formed. This complex is subsequently bound by UvrC and the second UvrB is released. If no lesion is found, the DNA wraps around the other UvrB subunit that will check the other stand for damage. The sequence is that of UvrABC system protein B from Streptococcus equi subsp. zooepidemicus (strain H70).